Consider the following 337-residue polypeptide: Diacylglycerol O-acyltransferase 2-like protein 6 (337 aa).

2 helical membrane-spanning segments follow: residues 22 to 42 (IPVY…LLLF) and 102 to 122 (YIIL…NFAT).

Belongs to the diacylglycerol acyltransferase family.

The protein localises to the endoplasmic reticulum membrane. It catalyses the reaction 1,2-di-(9Z-octadecenoyl)-sn-glycerol + (9Z)-octadecenoyl-CoA = 1,2,3-tri-(9Z-octadecenoyl)-glycerol + CoA. Diglyceride acyltransferase that uses fatty acyl-CoA as substrate. Particularly active with oleate as a substrate. Has no wax synthase activity to produce wax esters. The chain is Diacylglycerol O-acyltransferase 2-like protein 6 (Dgat2l6) from Mus musculus (Mouse).